We begin with the raw amino-acid sequence, 20 residues long: Protein PR-L3 (20 aa).

This sequence belongs to the BetVI family.

This chain is Protein PR-L3, found in Lupinus luteus (European yellow lupine).